The sequence spans 424 residues: Enolase (424 aa).

Residue Gln162 coordinates (2R)-2-phosphoglycerate. Glu204 functions as the Proton donor in the catalytic mechanism. Asp241, Glu284, and Asp311 together coordinate Mg(2+). Residues Lys336, Arg365, Ser366, and Lys387 each contribute to the (2R)-2-phosphoglycerate site. Residue Lys336 is the Proton acceptor of the active site.

The protein belongs to the enolase family. It depends on Mg(2+) as a cofactor.

Its subcellular location is the cytoplasm. The protein localises to the secreted. It is found in the cell surface. The enzyme catalyses (2R)-2-phosphoglycerate = phosphoenolpyruvate + H2O. Its pathway is carbohydrate degradation; glycolysis; pyruvate from D-glyceraldehyde 3-phosphate: step 4/5. Functionally, catalyzes the reversible conversion of 2-phosphoglycerate (2-PG) into phosphoenolpyruvate (PEP). It is essential for the degradation of carbohydrates via glycolysis. This is Enolase from Sinorhizobium fredii (strain NBRC 101917 / NGR234).